Reading from the N-terminus, the 492-residue chain is Heat shock factor protein 4 (492 aa).

Residues 17 to 121 (VPAFLGKLWA…QLLERVRRKV (105 aa)) mediate DNA binding. The hydrophobic repeat HR-A/B stretch occupies residues 129–203 (GRWRPEDLGR…GPLQAGPSNA (75 aa)). An interactions with DUSP26, MAPK1 and MAPK2 region spans residues 245–322 (LPETNLGLSP…ECDFCVTAPP (78 aa)). A disordered region spans residues 246 to 285 (PETNLGLSPHRARGPIISDIPEDSPSPEGTRLSPSSDGRR). Lys-293 is covalently cross-linked (Glycyl lysine isopeptide (Lys-Gly) (interchain with G-Cter in SUMO)). At Ser-298 the chain carries Phosphoserine. A disordered region spans residues 337–400 (GSFSPEGPRN…PAGPLDVLGP (64 aa)). Positions 364-389 (LGLESGDRSPESLLPPMLLQPPQESV) are hydrophobic repeat HR-C. Residues 374–388 (ESLLPPMLLQPPQES) show a composition bias toward low complexity.

The protein belongs to the HSF family. In terms of assembly, homotrimer. Exhibits constitutive DNA binding and forms trimers even in the absence of stress. Interacts with ALKBH4, DUSP26, MAPK1, MAPK2, MAPK8 and MAP kinase p38. In terms of processing, phosphorylated mainly on serine residues. Phosphorylation on Ser-298 promotes sumoylation on Lys-293. Isoform HSF4B is constitutively sumoylated. Sumoylation represses the transcriptional activity and is promoted by phosphorylation on Ser-298. HSFA is not sumoylated. Expressed in heart, skeletal muscle, eye and brain, and at much lower levels in some other tissues.

The protein resides in the nucleus. Functionally, heat-shock transcription factor that specifically binds heat shock promoter elements (HSE). Required for denucleation and organelle rupture and degradation that occur during eye lens terminal differentiation, when fiber cells that compose the lens degrade all membrane-bound organelles in order to provide lens with transparency to allow the passage of light. In this process, may regulate denucleation of lens fiber cells in part by activating DNASE2B transcription. May be involved in DNA repair through the transcriptional regulation of RAD51. May up-regulate p53/TP53 protein in eye lens fiber cells, possibly through protein stabilization. In the eye lens, controls the expression of alpha-crystallin B chain/CRYAB and consequently may be involved in the regulation of lysosomal acidification. Transcriptional repressor. In terms of biological role, transcriptional activator. This chain is Heat shock factor protein 4 (HSF4), found in Homo sapiens (Human).